The sequence spans 347 residues: N-acetyl-gamma-glutamyl-phosphate reductase (347 aa).

Cys152 is a catalytic residue.

It belongs to the NAGSA dehydrogenase family. Type 1 subfamily.

Its subcellular location is the cytoplasm. It carries out the reaction N-acetyl-L-glutamate 5-semialdehyde + phosphate + NADP(+) = N-acetyl-L-glutamyl 5-phosphate + NADPH + H(+). It participates in amino-acid biosynthesis; L-arginine biosynthesis; N(2)-acetyl-L-ornithine from L-glutamate: step 3/4. Its function is as follows. Catalyzes the NADPH-dependent reduction of N-acetyl-5-glutamyl phosphate to yield N-acetyl-L-glutamate 5-semialdehyde. This is N-acetyl-gamma-glutamyl-phosphate reductase from Neisseria gonorrhoeae (strain NCCP11945).